Here is a 623-residue protein sequence, read N- to C-terminus: Probable methyltransferase PMT8 (623 aa).

Residues 1–13 (MMRGRSDGGLKKR) are Cytoplasmic-facing. A helical; Signal-anchor for type II membrane protein transmembrane segment spans residues 14 to 34 (LIASVCVVALFVCFLFMYYGS). Over 35-623 (SSQGASALEY…LTSESLRDSE (589 aa)) the chain is Lumenal. N-linked (GlcNAc...) asparagine glycans are attached at residues asparagine 204, asparagine 350, and asparagine 588.

Belongs to the methyltransferase superfamily.

It is found in the golgi apparatus membrane. The protein is Probable methyltransferase PMT8 of Arabidopsis thaliana (Mouse-ear cress).